The primary structure comprises 66 residues: Clarkitoxin-1 (66 aa).

4 cysteine pairs are disulfide-bonded: Cys-3–Cys-24, Cys-17–Cys-42, Cys-46–Cys-59, and Cys-60–Cys-65.

As to expression, expressed by the venom gland.

It localises to the secreted. In terms of biological role, not toxic to mice when injected intravenously or intraperitoneally. This Micrurus clarki (Clark's coral snake) protein is Clarkitoxin-1.